The primary structure comprises 81 residues: Conotoxin Vc6.13 (81 aa).

A signal peptide spans 1 to 19 (MEKLTILLLVAAVLMSIQA). Residues 20–44 (LNQEQHQRAKINLLSKRKAPAERWW) constitute a propeptide that is removed on maturation. 3 disulfides stabilise this stretch: C49–C63, C56–C67, and C62–C72.

It belongs to the conotoxin O2 superfamily. As to expression, expressed by the venom duct.

The protein localises to the secreted. In terms of biological role, inhibits voltage-gated ion channels. This Conus victoriae (Queen Victoria cone) protein is Conotoxin Vc6.13.